We begin with the raw amino-acid sequence, 314 residues long: MDIEWFATGVGAVVVLYILYHFIRITLNILGPYVFCQPIDLKKKAGASWAVVTGATDGIGKSYSFELAKRGFNVYIVSRTQSKLEHTKKEILEVHPDIEVRFATFDFTNPSVSDYEKLLSKLNEVSIGILINNVGMFFDYPEMLHKINGGIDSIANVTIINTLPATLLSAGILPQMVPRKAGIIVNIGSVAGLATMAEWSVYSATKKYVEWITGCLQKEYGHQGIIFQAITPAMVATKMAGNPNTSFFTPDSDTFAKSALNTIGHASQTTGYITHQIECEMLKLLPDFVIDRSIKQTSAQLREALAKNENKPLM.

47–76 (ASWAVVTGATDGIGKSYSFELAKRGFNVYI) contributes to the NADP(+) binding site. Tyrosine 202 is a catalytic residue.

It belongs to the short-chain dehydrogenases/reductases (SDR) family. 17-beta-HSD 3 subfamily.

This is Putative steroid dehydrogenase 1 (stdh-1) from Caenorhabditis elegans.